The sequence spans 151 residues: Ribosome maturation factor RimP (151 aa).

Belongs to the RimP family.

The protein resides in the cytoplasm. Its function is as follows. Required for maturation of 30S ribosomal subunits. This is Ribosome maturation factor RimP from Synechocystis sp. (strain ATCC 27184 / PCC 6803 / Kazusa).